Consider the following 235-residue polypeptide: tRNA (guanine-N(1)-)-methyltransferase (235 aa).

Residues Gly-114 and 134-139 (IGDYIL) each bind S-adenosyl-L-methionine.

It belongs to the RNA methyltransferase TrmD family. In terms of assembly, homodimer.

Its subcellular location is the cytoplasm. The enzyme catalyses guanosine(37) in tRNA + S-adenosyl-L-methionine = N(1)-methylguanosine(37) in tRNA + S-adenosyl-L-homocysteine + H(+). Functionally, specifically methylates guanosine-37 in various tRNAs. The protein is tRNA (guanine-N(1)-)-methyltransferase of Ehrlichia ruminantium (strain Welgevonden).